The sequence spans 594 residues: DEAD-box ATP-dependent RNA helicase 25 (594 aa).

Disordered regions lie at residues 56-80 and 92-121; these read RSGG…EEGL and GVRE…VDGS. The Q motif motif lies at 126 to 154; sequence TRFDQCTISPLSLKAVKDAGYERMTQVQE. In terms of domain architecture, Helicase ATP-binding spans 157-340; sequence LPVILQGKDV…HIAMKKNYKF (184 aa). Residue 170 to 177 participates in ATP binding; that stretch reads AKTGTGKT. The DEAD box signature appears at 288–291; that stretch reads DEAD. Positions 370–520 constitute a Helicase C-terminal domain; that stretch reads ILYDVLKKHV…SVDSSTQTIV (151 aa).

The protein belongs to the DEAD box helicase family.

The catalysed reaction is ATP + H2O = ADP + phosphate + H(+). The polypeptide is DEAD-box ATP-dependent RNA helicase 25 (Oryza sativa subsp. japonica (Rice)).